The chain runs to 164 residues: MRVVIQRVKGAILSVRKENIGENEKELEIISEIKNGLICFLGIHKNDTWEDALYIIRKCLNLRLWNNDNKTWDKNVKDLNYELLIVSQFTLFGNTKKGNKPDFHLAKEPNEALIFYNKIIDEFKKQYNDDKIKIGKFGNYMNIDVTNDGPVTIYIDTHDINLNK.

2 residues coordinate tRNA: Trp-72 and Phe-89. The active-site Nucleophile is the Thr-90. The C-terminal adenosine nucleotide of tRNA motif lies at 104–107; the sequence is HLAK. Positions 149-150 match the Gly-cisPro motif, allows the protein to recognize chirality of D-amino acids motif; the sequence is GP.

The protein belongs to the DTD family. In terms of assembly, homodimer.

The protein localises to the cytoplasm. The catalysed reaction is glycyl-tRNA(Ala) + H2O = tRNA(Ala) + glycine + H(+). The enzyme catalyses a D-aminoacyl-tRNA + H2O = a tRNA + a D-alpha-amino acid + H(+). It catalyses the reaction D-tyrosyl-tRNA(Tyr) + H2O = D-tyrosine + tRNA(Tyr). Its function is as follows. D-aminoacyl-tRNA deacylase, with no observable activity on tRNAs charged with their cognate L-amino acid. Probably acts by rejecting L-amino acids from its binding site rather than specific recognition of D-amino acids. Catalyzes the hydrolysis of D-tyrosyl-tRNA(Tyr), has no activity on correctly charged L-tyrosyl-tRNA(Tyr). Hydrolyzes correctly charged, achiral, glycyl-tRNA(Gly). Deacylates mischarged D.melanogaster and E.coli glycyl-tRNA(Ala). Probably acts via tRNA-based rather than protein-based catalysis. Acts on tRNAs only when the D-amino acid is either attached to the ribose 3'-OH or transferred to the 3'-OH from the 2'-OH through rapid transesterification. Binds a number of other D-amino acids (D-Arg, D-Glu, D-His, D-Lys, D-Ser), suggesting it may also deacylate other mischarged tRNAs. The chain is D-aminoacyl-tRNA deacylase from Plasmodium falciparum (isolate 3D7).